The chain runs to 672 residues: uncharacterized protein (672 aa).

Basic and acidic residues predominate over residues 1-10 (MAKSDGDDPL). Positions 1-40 (MAKSDGDDPLRPASPRLRSSRRHSLRYSAYTGGPDPLAPP) are disordered.

This is an uncharacterized protein from Mycobacterium tuberculosis (strain CDC 1551 / Oshkosh).